A 434-amino-acid chain; its full sequence is UPF0597 protein CLB_1949 (434 aa).

The protein belongs to the UPF0597 family.

In Clostridium botulinum (strain ATCC 19397 / Type A), this protein is UPF0597 protein CLB_1949.